Here is a 30-residue protein sequence, read N- to C-terminus: Poly-His-poly-Gly peptide 2 (30 aa).

Over residues 1-18 the composition is skewed to basic residues; that stretch reads EDDHDHHHHHHHHHHHHG. Positions 1 to 30 are disordered; sequence EDDHDHHHHHHHHHHHHGVGGGGGGGGGGA. Residues 19 to 30 are compositionally biased toward gly residues; sequence VGGGGGGGGGGA.

As to expression, expressed by the venom gland.

Its subcellular location is the secreted. Functionally, may serve as a metalloproteinase inhibitor during glandular storage. Their inhibition may be instantly disengaged, by dilution or physiochemical change, when venom is injected into tissue of the victim. This is Poly-His-poly-Gly peptide 2 from Atheris nitschei (Great lakes bush viper).